Here is a 304-residue protein sequence, read N- to C-terminus: MKSNNLATEGINSLPLDHGENDAIRVSVLSEALPYIQKFAGRRIVIKYGGSAMSKESLKEAVFRDIALLSSVGAQPVIIHGGGPEINHWLTKLEIKSEFRDGLRITDSNTMDIVEMVLIGRVNKQIVNGINKVGASAVGLCGIDGKLIEARPWGDGSYGLVGEVARVNADVIEPLIANGYIPVISSVASSVEGINYNINADTVAGEIAAAIGAEKLILLTDTSGILKNKSDPLSLIQNIRLSDMRELIDKEVVNGGMTPKAECCIRALAQGVNAAHIIDGRIPHALLLEVFTDKGIGTMIVSRS.

Residues 82-83 (GG), arginine 104, and asparagine 197 contribute to the substrate site.

The protein belongs to the acetylglutamate kinase family. ArgB subfamily.

It localises to the cytoplasm. It carries out the reaction N-acetyl-L-glutamate + ATP = N-acetyl-L-glutamyl 5-phosphate + ADP. The protein operates within amino-acid biosynthesis; L-arginine biosynthesis; N(2)-acetyl-L-ornithine from L-glutamate: step 2/4. Functionally, catalyzes the ATP-dependent phosphorylation of N-acetyl-L-glutamate. The chain is Acetylglutamate kinase from Prochlorococcus marinus (strain SARG / CCMP1375 / SS120).